A 220-amino-acid chain; its full sequence is Deoxyribose-phosphate aldolase 1 (220 aa).

Catalysis depends on Asp89, which acts as the Proton donor/acceptor. Lys151 serves as the catalytic Schiff-base intermediate with acetaldehyde. Residue Lys180 is the Proton donor/acceptor of the active site.

This sequence belongs to the DeoC/FbaB aldolase family. DeoC type 1 subfamily.

It is found in the cytoplasm. The enzyme catalyses 2-deoxy-D-ribose 5-phosphate = D-glyceraldehyde 3-phosphate + acetaldehyde. The protein operates within carbohydrate degradation; 2-deoxy-D-ribose 1-phosphate degradation; D-glyceraldehyde 3-phosphate and acetaldehyde from 2-deoxy-alpha-D-ribose 1-phosphate: step 2/2. Functionally, catalyzes a reversible aldol reaction between acetaldehyde and D-glyceraldehyde 3-phosphate to generate 2-deoxy-D-ribose 5-phosphate. The polypeptide is Deoxyribose-phosphate aldolase 1 (Staphylococcus aureus (strain MRSA252)).